We begin with the raw amino-acid sequence, 496 residues long: Cobyric acid synthase (496 aa).

The 191-residue stretch at 255–445 folds into the GATase cobBQ-type domain; sequence DLEIAVLKLP…LHGLLDNGPW (191 aa). The active-site Nucleophile is the Cys-336. His-437 is a catalytic residue.

The protein belongs to the CobB/CobQ family. CobQ subfamily.

It functions in the pathway cofactor biosynthesis; adenosylcobalamin biosynthesis. Catalyzes amidations at positions B, D, E, and G on adenosylcobyrinic A,C-diamide. NH(2) groups are provided by glutamine, and one molecule of ATP is hydrogenolyzed for each amidation. In Parasynechococcus marenigrum (strain WH8102), this protein is Cobyric acid synthase.